Here is an 88-residue protein sequence, read N- to C-terminus: KAKGKAKRRSSRAGLQFPVGRVHRFLRKGNYANRVGAGAPVYLAAVLEYLAAEILELAGNAARDNKKTRIIPRHLQLAIRNDEELNKL.

Belongs to the histone H2A family. In terms of assembly, the nucleosome is a histone octamer containing two molecules each of H2A, H2B, H3 and H4 assembled in one H3-H4 heterotetramer and two H2A-H2B heterodimers. The octamer wraps approximately 147 bp of DNA. Post-translationally, monoubiquitination in C-terminus gives a specific tag for epigenetic transcriptional repression.

The protein resides in the nucleus. It is found in the chromosome. Core component of nucleosome. Nucleosomes wrap and compact DNA into chromatin, limiting DNA accessibility to the cellular machineries which require DNA as a template. Histones thereby play a central role in transcription regulation, DNA repair, DNA replication and chromosomal stability. DNA accessibility is regulated via a complex set of post-translational modifications of histones, also called histone code, and nucleosome remodeling. This is Histone H2A-beta, sperm from Strongylocentrotus purpuratus (Purple sea urchin).